The following is a 1063-amino-acid chain: Cobalt-zinc-cadmium resistance protein CzcA (1063 aa).

12 helical membrane-spanning segments follow: residues 14–34, 350–370, 371–391, 395–415, 452–472, 487–507, 534–554, 883–903, 906–926, 937–957, 981–1001, and 1013–1033; these read WLVL…YNRL, GAVL…AALI, TATI…NYKI, LMSL…VIVE, LIFG…LTGV, ALLG…ALFI, LANT…CVAI, VVVP…FNNI, GLLV…ALWI, VGFI…LSFI, PVLM…IATG, and VVIG…PVLY. The tract at residues 1040 to 1063 is disordered; it reads DEDAEDTREPVTQTHQPDQGRQPA. Positions 1049-1063 are enriched in polar residues; the sequence is PVTQTHQPDQGRQPA.

It belongs to the resistance-nodulation-cell division (RND) (TC 2.A.6) family.

The protein localises to the cell inner membrane. Functionally, has a low cation transport activity for cobalt, it is essential for the expression of cobalt, zinc, and cadmium resistance. CzcA and CzcB together would act in zinc efflux nearly as effectively as the complete CZC efflux system (CzcABC). In Cupriavidus metallidurans (strain ATCC 43123 / DSM 2839 / NBRC 102507 / CH34) (Ralstonia metallidurans), this protein is Cobalt-zinc-cadmium resistance protein CzcA (czcA).